A 311-amino-acid polypeptide reads, in one-letter code: Malate dehydrogenase (311 aa).

Residues 7-13 (GAAGGIG) and Asp-34 contribute to the NAD(+) site. 2 residues coordinate substrate: Arg-81 and Arg-87. Residues Asn-94 and 117–119 (ITN) each bind NAD(+). Substrate is bound by residues Asn-119 and Arg-153. The active-site Proton acceptor is the His-177. Met-227 contacts NAD(+).

Belongs to the LDH/MDH superfamily. MDH type 1 family. In terms of assembly, homodimer.

It catalyses the reaction (S)-malate + NAD(+) = oxaloacetate + NADH + H(+). Functionally, catalyzes the reversible oxidation of malate to oxaloacetate. This chain is Malate dehydrogenase, found in Histophilus somni (strain 2336) (Haemophilus somnus).